Reading from the N-terminus, the 927-residue chain is Disks large homolog 1 (927 aa).

The L27 domain maps to 4-64 (RKQDTQRALT…FYEVTLLDNP (61 aa)). PDZ domains lie at 223-310 (EITL…RRRK), 318-405 (DIKL…AKPT), and 466-547 (KVVL…QYRP). Residues 581-651 (KRSLYVRALF…PSKRRVEKKE (71 aa)) enclose the SH3 domain. Residues 692–719 (DQSEMETSDVDQHVTSNASDSESSYRGQ) form a disordered region. Over residues 704–717 (HVTSNASDSESSYR) the composition is skewed to polar residues. The 176-residue stretch at 737–912 (SRPVIILGPT…IYNQIKQIIE (176 aa)) folds into the Guanylate kinase-like domain.

The protein belongs to the MAGUK family.

The protein localises to the cell membrane. It is found in the endoplasmic reticulum membrane. The protein resides in the cell junction. It localises to the cytoplasm. Its subcellular location is the apical cell membrane. In terms of biological role, essential multidomain scaffolding protein required for normal development. Recruits channels, receptors and signaling molecules to discrete plasma membrane domains in polarized cells. Promotes epithelial cell layer barrier function via maintaining cell-cell adhesion. May play a role in adherens junction assembly, signal transduction and cell proliferation. The protein is Disks large homolog 1 (dlg1) of Xenopus tropicalis (Western clawed frog).